The sequence spans 116 residues: Somatostatin (116 aa).

A signal peptide spans 1–24 (MLSCRLQCALAALSIVLALGCVTG). A propeptide spanning residues 25–88 (APSDPRLRQF…QDEMRLELQR (64 aa)) is cleaved from the precursor. A43 bears the Alanine amide mark. The interval 62-82 (QTENDALEPEDLSQAAEQDEM) is disordered. The cysteines at positions 105 and 116 are disulfide-linked.

Belongs to the somatostatin family. Post-translationally, C-terminal amidation of the neuronostatin peptide is required for its biological activity, including for the regulation of mean arterial pressure.

It localises to the secreted. In terms of biological role, inhibits the secretion of pituitary hormones, including that of growth hormone/somatotropin (GH1), PRL, ACTH, luteinizing hormone (LH) and TSH. Also impairs ghrelin- and GnRH-stimulated secretion of GH1 and LH; the inhibition of ghrelin-stimulated secretion of GH1 can be further increased by neuronostatin. Its function is as follows. May enhance low-glucose-induced glucagon release by pancreatic alpha cells. This effect may be mediated by binding to GPR107 and PKA activation. May regulate cardiac contractile function. May compromise cardiomyocyte viability. In the central nervous system, may impair memory retention and may affect hippocampal excitability. May also have anxiolytic and anorexigenic effects. May play a role in arterial pressure regulation. May inhibit basal, but not ghrelin- or GnRH-stimulated secretion of GH1 or LH, but does not affect the release of other pituitary hormones, including PRL, ACTH, FSH or TSH. Potentiates inhibitory action of somatostatin on ghrelin-stimulated secretion of GH1, but not that on GnRH-stimulated secretion of LH. This Homo sapiens (Human) protein is Somatostatin (SST).